Here is a 548-residue protein sequence, read N- to C-terminus: Alpha-1,3-mannosyl-glycoprotein 4-beta-N-acetylglucosaminyltransferase B (548 aa).

At 1–7 (MRLRNGT) the chain is on the cytoplasmic side. A helical; Signal-anchor for type II membrane protein membrane pass occupies residues 8–28 (FLTLLLFCLCAFLSLSWYAAL). Residues 29–548 (SGQKGDVVDV…LSEIFLKKAD (520 aa)) are Lumenal-facing. Positions 36 to 83 (VDVYQREFLALRDRLHAAEQESLKRSKELNLVLDEIKRAVSERQALRD) form a coiled coil. Asn-87 and Asn-103 each carry an N-linked (GlcNAc...) asparagine glycan.

It belongs to the glycosyltransferase 54 family. In terms of assembly, interacts with SLC35A3. The cofactor is a divalent metal cation. Post-translationally, N-glycosylated. As to expression, widely expressed. Strongly overexpressed in pancreatic cancer.

The protein localises to the golgi apparatus membrane. The catalysed reaction is an N(4)-{beta-D-GlcNAc-(1-&gt;2)-alpha-D-Man-(1-&gt;3)-[alpha-D-Man-(1-&gt;6)]-beta-D-Man-(1-&gt;4)-beta-D-GlcNAc-(1-&gt;4)-beta-D-GlcNAc}-L-asparaginyl-[protein] + UDP-N-acetyl-alpha-D-glucosamine = an N(4)-{beta-D-GlcNAc-(1-&gt;2)-[beta-D-GlcNAc-(1-&gt;4)]-alpha-D-Man-(1-&gt;3)-[alpha-D-Man-(1-&gt;6)]-beta-D-Man-(1-&gt;4)-beta-D-GlcNAc-(1-&gt;4)-beta-D-GlcNAc}-L-asparaginyl-[protein] + UDP + H(+). It catalyses the reaction N(4)-{beta-D-GlcNAc-(1-&gt;2)-alpha-D-Man-(1-&gt;3)-[beta-D-GlcNAc-(1-&gt;2)-alpha-D-Man-(1-&gt;6)]-beta-D-Man-(1-&gt;4)-beta-D-GlcNAc-(1-&gt;4)-beta-D-GlcNAc}-L-asparaginyl-[protein] + UDP-N-acetyl-alpha-D-glucosamine = N(4)-{beta-D-GlcNAc-(1-&gt;2)-[beta-D-GlcNAc-(1-&gt;4)]-alpha-D-Man-(1-&gt;3)-[beta-D-GlcNAc-(1-&gt;2)-alpha-D-Man-(1-&gt;6)]-beta-D-Man-(1-&gt;4)-beta-D-GlcNAc-(1-&gt;4)-beta-D-GlcNAc}-L-asparaginyl-[protein] + UDP + H(+). It carries out the reaction an N(4)-{beta-D-GlcNAc-(1-&gt;2)-alpha-D-Man-(1-&gt;3)-[beta-D-GlcNAc-(1-&gt;2)-[beta-D-GlcNAc-(1-&gt;6)]-alpha-D-Man-(1-&gt;6)]-beta-D-Man-(1-&gt;4)-beta-D-GlcNAc-(1-&gt;4)-beta-D-GlcNAc}-L-asparaginyl-[protein] + UDP-N-acetyl-alpha-D-glucosamine = an N(4)-{beta-D-GlcNAc-(1-&gt;2)-[beta-D-GlcNAc-(1-&gt;4)]-alpha-D-Man-(1-&gt;3)-[beta-D-GlcNAc-(1-&gt;2)-[beta-D-GlcNAc-(1-&gt;6)]-alpha-D-Man-(1-&gt;6)]-beta-D-Man-(1-&gt;4)-beta-D-GlcNAc-(1-&gt;4)-beta-D-GlcNAc}-L-asparaginyl-[protein] + UDP + H(+). The enzyme catalyses an N(4)-{beta-D-GlcNAc-(1-&gt;2)-alpha-D-Man-(1-&gt;3)-[beta-D-GlcNAc-(1-&gt;2)-alpha-D-Man-(1-&gt;6)]-beta-D-Man-(1-&gt;4)-beta-D-GlcNAc-(1-&gt;4)-[alpha-L-Fuc-(1-&gt;6)]-beta-D-GlcNAc}-L-asparaginyl-[protein] + UDP-N-acetyl-alpha-D-glucosamine = N(4)-{beta-D-GlcNAc-(1-&gt;2)-[beta-D-GlcNAc-(1-&gt;4)]-alpha-D-Man-(1-&gt;3)-[beta-D-GlcNAc-(1-&gt;2)-alpha-D-Man-(1-&gt;6)]-beta-D-Man-(1-&gt;4)-beta-D-GlcNAc-(1-&gt;4)-[alpha-L-Fuc-(1-&gt;6)]-beta-D-GlcNAc}-asparaginyl-[protein] + UDP + H(+). The catalysed reaction is an N(4)-{beta-D-GlcNAc-(1-&gt;2)-alpha-D-Man-(1-&gt;3)-[beta-D-Gal-(1-&gt;4)-beta-D-GlcNAc-(1-&gt;2)-alpha-D-Man-(1-&gt;6)]-beta-D-Man-(1-&gt;4)-beta-D-GlcNAc-(1-&gt;4)-beta-D-GlcNAc}-L-asparaginyl-[protein] + UDP-N-acetyl-alpha-D-glucosamine = an N(4)-{beta-D-GlcNAc-(1-&gt;2)-[beta-D-GlcNAc-(1-&gt;4)]-alpha-D-Man-(1-&gt;3)-[beta-D-Gal-(1-&gt;4)-beta-D-GlcNAc-(1-&gt;2)-alpha-D-Man-(1-&gt;6)]-beta-D-Man-(1-&gt;4)-beta-D-GlcNAc-(1-&gt;4)-beta-D-GlcNAc}-L-asparaginyl-[protein] + UDP + H(+). It catalyses the reaction N(4)-{beta-D-GlcNAc-(1-&gt;2)-alpha-D-Man-(1-&gt;3)-[alpha-D-Man-(1-&gt;3)-{alpha-D-Man-(1-&gt;6)}-alpha-D-Man-(1-&gt;6)]-beta-D-Man-(1-&gt;4)-beta-D-GlcNAc-(1-&gt;4)-beta-D-GlcNAc}-asparaginyl-[protein] + UDP-N-acetyl-alpha-D-glucosamine = N(4)-{beta-D-GlcNAc-(1-&gt;2)-[beta-D-GlcNAc-(1-&gt;4)]-alpha-D-Man-(1-&gt;3)-[alpha-D-Man-(1-&gt;3)-{alpha-D-Man-(1-&gt;6)}-alpha-D-Man-(1-&gt;6)]-beta-D-Man-(1-&gt;4)-beta-D-GlcNAc-(1-&gt;4)-beta-D-GlcNAc}-asparaginyl-[protein] + UDP + H(+). It carries out the reaction N(4)-{beta-D-GlcNAc-(1-&gt;2)-alpha-D-Man-(1-&gt;3)-beta-D-Man-(1-&gt;4)-beta-D-GlcNAc-(1-&gt;4)-beta-D-GlcNAc}-asparaginyl-[protein] + UDP-N-acetyl-alpha-D-glucosamine = N(4)-{beta-D-GlcNAc-(1-&gt;2)-[beta-D-GlcNAc-(1-&gt;4)]-alpha-D-Man-(1-&gt;3)-beta-D-Man-(1-&gt;4)-beta-D-GlcNAc-(1-&gt;4)-beta-D-GlcNAc}-asparaginyl-[protein] + UDP + H(+). The protein operates within protein modification; protein glycosylation. Glycosyltransferase that catalyzes the transfer of GlcNAc from UDP-GlcNAc to the GlcNAcbeta1-2Manalpha1-3 arm of the core structure of N-linked glycans through a beta1-4 linkage and participates in the production of tri- and tetra-antennary N-linked sugar chains. Prefers complex-type N-glycans over hybrid-types. Has lower affinities for donors or acceptors than MGAT4A, suggesting that, under physiological conditions, it is not the main contributor in N-glycan biosynthesis. This chain is Alpha-1,3-mannosyl-glycoprotein 4-beta-N-acetylglucosaminyltransferase B, found in Homo sapiens (Human).